The chain runs to 401 residues: MRTLWQHCHVATMADGRYSAIEDAAIVTSAGLIEWIGPRAELAPVEADRTVDLGGAWVTPGLIDCHTHAVFGGNRSGEFEQRLQGVSYAEIAAQGGGIASTVRATRAASEDELFASARQRVQALMRDGVTTLEVKSGYGLDLANERKMLRVARRLADELPLTVRATCLAAHALPPEYAGRADDYIAHICDEMLPALAGEGLVDAVDAFCEHLAFSPAQVERLFIKARELGLPVKLHAEQLSSLHGSSLAARYQALSADHLEFMTEEDAVAMANAGTVAVLLPGAFYFLRETQLPPMDALRRHGVKIALASDLNPGTSPGLSLRLMLNMGCTCFRMTPEEALAGVTVHAATALGLGDSHGSLQVGKVADFVAWQIERPADLAYWLGGDLPKRVVRMGHEISN.

Fe(3+) is bound by residues His-66 and His-68. Zn(2+)-binding residues include His-66 and His-68. 4-imidazolone-5-propanoate contacts are provided by Arg-75, Tyr-138, and His-171. Tyr-138 provides a ligand contact to N-formimidoyl-L-glutamate. Residue His-236 coordinates Fe(3+). His-236 lines the Zn(2+) pocket. Position 239 (Gln-239) interacts with 4-imidazolone-5-propanoate. Residue Asp-311 participates in Fe(3+) binding. Zn(2+) is bound at residue Asp-311. The N-formimidoyl-L-glutamate site is built by Asn-313 and Gly-315. Thr-316 lines the 4-imidazolone-5-propanoate pocket.

This sequence belongs to the metallo-dependent hydrolases superfamily. HutI family. It depends on Zn(2+) as a cofactor. The cofactor is Fe(3+).

Its subcellular location is the cytoplasm. It carries out the reaction 4-imidazolone-5-propanoate + H2O = N-formimidoyl-L-glutamate. Its pathway is amino-acid degradation; L-histidine degradation into L-glutamate; N-formimidoyl-L-glutamate from L-histidine: step 3/3. Its function is as follows. Catalyzes the hydrolytic cleavage of the carbon-nitrogen bond in imidazolone-5-propanoate to yield N-formimidoyl-L-glutamate. It is the third step in the universal histidine degradation pathway. In Pseudomonas putida (strain ATCC 700007 / DSM 6899 / JCM 31910 / BCRC 17059 / LMG 24140 / F1), this protein is Imidazolonepropionase.